A 212-amino-acid polypeptide reads, in one-letter code: ER lumen protein-retaining receptor (212 aa).

The Lumenal portion of the chain corresponds to 1 to 2; sequence MN. A helical transmembrane segment spans residues 3–21; that stretch reads IFRFAGDLSHVFAIIILLL. Over 22-35 the chain is Cytoplasmic; it reads KIWKTRSCAGISGK. Residues 36–53 traverse the membrane as a helical segment; sequence SQILFAVVYLTRYLDLFT. At 54-61 the chain is on the lumenal side; it reads TYVSLYNS. A helical transmembrane segment spans residues 62–80; sequence VMKVLFLATSGATVYLMYV. Topologically, residues 81 to 96 are cytoplasmic; that stretch reads KFKATYDHNHDSFRIE. A helical membrane pass occupies residues 97-110; that stretch reads FLLVPCALLSLVIN. Topologically, residues 111–117 are lumenal; that stretch reads HEFTVME. The chain crosses the membrane as a helical span at residues 118-137; it reads VLWTFSIYLESVAILPQLFL. The Cytoplasmic segment spans residues 138-149; sequence VSRTGEAESITS. A helical membrane pass occupies residues 150-168; the sequence is HYLFALGSYRALYLLNWVY. At 169-178 the chain is on the lumenal side; it reads RYMVESHYDL. A helical membrane pass occupies residues 179 to 199; the sequence is IAIFAGVVQTVLYCDFFYLYI. Residues 200–212 lie on the Cytoplasmic side of the membrane; the sequence is TKVLKGKKLQLPA.

Belongs to the ERD2 family.

It is found in the endoplasmic reticulum membrane. Functionally, required for the retention of luminal endoplasmic reticulum proteins. Determines the specificity of the luminal ER protein retention system. Also required for normal vesicular traffic through the Golgi. This is ER lumen protein-retaining receptor (KdelR) from Drosophila melanogaster (Fruit fly).